The chain runs to 574 residues: Septation ring formation regulator EzrA (574 aa).

The Extracellular segment spans residues 1–7 (MSSGLIL). A helical transmembrane segment spans residues 8–26 (LIVAIVLLVIIAYLVGVII). Residues 27-574 (RKRNDTLITS…YEKTRERIRF (548 aa)) are Cytoplasmic-facing. Coiled coils occupy residues 102-131 (NFIR…REAL), 161-190 (ENED…FVAL), 276-379 (VTLD…QQEK), and 459-493 (QLEA…NLEE).

Belongs to the EzrA family.

It localises to the cell membrane. Functionally, negative regulator of FtsZ ring formation; modulates the frequency and position of FtsZ ring formation. Inhibits FtsZ ring formation at polar sites. Interacts either with FtsZ or with one of its binding partners to promote depolymerization. This chain is Septation ring formation regulator EzrA, found in Streptococcus equi subsp. zooepidemicus (strain MGCS10565).